A 325-amino-acid polypeptide reads, in one-letter code: 6-phosphogluconolactonase 3, chloroplastic (325 aa).

Residues 1-68 (MASSSCFLRS…KSSDTRRKVK (68 aa)) constitute a chloroplast transit peptide. The tract at residues 51-73 (SIGTGSTKKSSDTRRKVKSMATT) is disordered. Residues 323–325 (SKL) carry the Microbody targeting signal motif.

The protein belongs to the glucosamine/galactosamine-6-phosphate isomerase family. 6-phosphogluconolactonase subfamily. As to quaternary structure, interacts with TRXM2. Expressed in roots, leaves and shoots.

The protein resides in the plastid. It localises to the chloroplast. It is found in the peroxisome. It carries out the reaction 6-phospho-D-glucono-1,5-lactone + H2O = 6-phospho-D-gluconate + H(+). The protein operates within carbohydrate degradation; pentose phosphate pathway; D-ribulose 5-phosphate from D-glucose 6-phosphate (oxidative stage): step 2/3. Catalyzes the hydrolysis of 6-phosphogluconolactone to 6-phosphogluconate. Involved in the regulation of cellular redox state; enzymatic activity is required for this function. Required for sugar-dependent expression of nitrate assimilation genes in the nucleus of root cells. The polypeptide is 6-phosphogluconolactonase 3, chloroplastic (Arabidopsis thaliana (Mouse-ear cress)).